The chain runs to 3661 residues: Serine/threonine-protein kinase SMG1 (3661 aa).

A compositionally biased stretch (low complexity) spans 1-11 (MSRRAPGSRLS). 2 disordered regions span residues 1–101 (MSRR…TYGR) and 116–144 (PEFT…MSYS). The interaction with SMG8 and SMG9 stretch occupies residues 1-1977 (MSRRAPGSRL…GVLLQQHMYV (1977 aa)). Positions 26-35 (NDWQPRTDSA) are enriched in polar residues. Composition is skewed to basic and acidic residues over residues 69–86 (QRHD…DEKG) and 129–138 (ATKDMRKSQE). Lysine 173 carries the N6-acetyllysine modification. Over residues 1154–1165 (RNSASPKHSLNG) the composition is skewed to polar residues. Residues 1154 to 1175 (RNSASPKHSLNGESRKTVLSKP) are disordered. Positions 1283–1866 (RELQKSIEVQ…LYPAIVGTIS (584 aa)) constitute an FAT domain. One copy of the HEAT repeat lies at 1817-1852 (APWRGIIPQLFSRLNHPEVYVRQSICNLLCRVAQDS). Residues 1898 to 1919 (ECEGGSPPASQDSNKDEPKSGL) are disordered. Residues 2124-2463 (VGGTITILPT…MEREITRSLF (340 aa)) enclose the PI3K/PI4K catalytic domain. The interval 2130–2136 (ILPTKTK) is G-loop. Residues 2332–2340 (GLGDRHLDN) are catalytic loop. Residues 2352-2376 (HIDYNVCFEKGKSLRVPEKVPFRMT) form an activation loop region. Threonine 3550 carries the post-translational modification Phosphothreonine. 2 positions are modified to phosphoserine: serine 3556 and serine 3570. Positions 3568 to 3579 (ATSADTPPSTVP) are enriched in polar residues. A disordered region spans residues 3568–3591 (ATSADTPPSTVPGTGKSVACSPKK). Phosphothreonine occurs at positions 3573 and 3577. Residues 3629 to 3661 (RRMSVAEQVDYVIKEATNLDNLAQLYEGWTAWV) enclose the FATC domain.

Belongs to the PI3/PI4-kinase family. In terms of assembly, component of the SMG1C complex composed of SMG1, SMG8 and SMG9; the recruitment of SMG8 to SMG1 N-terminus induces a large conformational change in the SMG1 C-terminal head domain containing the catalytic domain. Component of the transient SURF (SMG1-UPF1-eRF1-eRF3) complex. Part of a complex composed of SMG1, DHX34 and UPF1; within the complex DHX34 acts as a scaffolding protein to facilitate SMG1 phosphorylation of UPF1. Interacts with PRKCI. Interacts with TELO2 and TTI1. Interacts with RUVBL1 and RUVBL2. Interacts with UPF2. Interacts with DHX34 (via C-terminus); the interaction is RNA-independent. Mn(2+) serves as cofactor. Autophosphorylated. As to expression, widely expressed, with highest level in heart and skeletal muscle. Expressed in placenta, brain, lung and spleen, but not in liver.

It is found in the nucleus. The protein resides in the cytoplasm. It catalyses the reaction L-seryl-[protein] + ATP = O-phospho-L-seryl-[protein] + ADP + H(+). The catalysed reaction is L-threonyl-[protein] + ATP = O-phospho-L-threonyl-[protein] + ADP + H(+). Its activity is regulated as follows. Inhibited by caffeine, LY294002 and wortmannin. In terms of biological role, serine/threonine protein kinase involved in both mRNA surveillance and genotoxic stress response pathways. Recognizes the substrate consensus sequence [ST]-Q. Plays a central role in nonsense-mediated decay (NMD) of mRNAs containing premature stop codons by phosphorylating UPF1/RENT1. Recruited by release factors to stalled ribosomes together with SMG8 and SMG9 (forming the SMG1C protein kinase complex), and UPF1 to form the transient SURF (SMG1-UPF1-eRF1-eRF3) complex. In EJC-dependent NMD, the SURF complex associates with the exon junction complex (EJC) through UPF2 and allows the formation of an UPF1-UPF2-UPF3 surveillance complex which is believed to activate NMD. Also acts as a genotoxic stress-activated protein kinase that displays some functional overlap with ATM. Can phosphorylate p53/TP53 and is required for optimal p53/TP53 activation after cellular exposure to genotoxic stress. Its depletion leads to spontaneous DNA damage and increased sensitivity to ionizing radiation (IR). May activate PRKCI but not PRKCZ. The chain is Serine/threonine-protein kinase SMG1 from Homo sapiens (Human).